Reading from the N-terminus, the 140-residue chain is MFFTISRKNMSQKLSLLLLVFGLIWGLMLLHYTFQQPRHQSSVKLREQILDLSKRYVKALAEENKNTVDVENGASMAGYADLKRTIAVLLDDILQRLVKLENKVDYIVVNGSAANTTNGTSGNLVPVTTNKRTNVSGSIR.

An N-terminal signal peptide occupies residues Met-1 to Gly-26. 2 N-linked (GlcNAc...) asparagine glycosylation sites follow: Asn-110 and Asn-134. The disordered stretch occupies residues Thr-120–Arg-140.

It localises to the secreted. The chain is Coiled-coil domain-containing protein 126 (CCDC126) from Homo sapiens (Human).